The primary structure comprises 289 residues: 4-hydroxybenzoate octaprenyltransferase (289 aa).

Transmembrane regions (helical) follow at residues 33-53, 99-119, 141-161, 163-183, 213-233, 238-258, and 268-288; these read LWALWVAAPGLPPLWILAVFV, LFVVLVVLAFLLVLTLNTMTI, LPQVVLGAAFGWSIPMAFAAV, ESVPLSCWLMFLANILWAVAY, LIIGILQVAVLALMVVIGRLN, EFYWSVLVAGLLFAYQQKLIV, and AFLNNNYVGLVLFLGLAMSYW.

Belongs to the UbiA prenyltransferase family. It depends on Mg(2+) as a cofactor.

Its subcellular location is the cell inner membrane. The enzyme catalyses all-trans-octaprenyl diphosphate + 4-hydroxybenzoate = 4-hydroxy-3-(all-trans-octaprenyl)benzoate + diphosphate. Its pathway is cofactor biosynthesis; ubiquinone biosynthesis. In terms of biological role, catalyzes the prenylation of para-hydroxybenzoate (PHB) with an all-trans polyprenyl group. Mediates the second step in the final reaction sequence of ubiquinone-8 (UQ-8) biosynthesis, which is the condensation of the polyisoprenoid side chain with PHB, generating the first membrane-bound Q intermediate 3-octaprenyl-4-hydroxybenzoate. This Enterobacter sp. (strain 638) protein is 4-hydroxybenzoate octaprenyltransferase.